Consider the following 387-residue polypeptide: 3-hydroxy-D-aspartate aldolase (387 aa).

At Lys-62 the chain carries N6-(pyridoxal phosphate)lysine. Gln-85 contacts pyridoxal 5'-phosphate. The segment at 199–228 (HGQLRGPQGQAGRRHCPGERGRGRAGGRGL) is disordered. Pyridoxal 5'-phosphate is bound by residues Thr-238, 256-257 (GS), and Tyr-265. Mg(2+)-binding residues include His-355 and Asp-357.

It belongs to the DSD1 family. In terms of assembly, homodimer. Requires pyridoxal 5'-phosphate as cofactor. The cofactor is Mn(2+). Mg(2+) serves as cofactor. Co(2+) is required as a cofactor.

It carries out the reaction (3S)-3-hydroxy-D-aspartate = glyoxylate + glycine. The enzyme catalyses (3R)-3-hydroxy-D-aspartate = glyoxylate + glycine. In terms of biological role, catalyzes the condensation of glyoxylate and glycine into (2R,3S)-beta-hydroxyaspartate ((3S)-3-hydroxy-D-aspartate). Functions in glyoxylate assimilation via the beta-hydroxyaspartate cycle (BHAC). In vitro catalyzes the cleavage of both D-erythro- and D-threo-3-hydroxyaspartate to glycine and glyoxylate. Also acts on D-threonine, D-3-phenylserine and D-3-3,4-methylenedioxyphenylserine. This chain is 3-hydroxy-D-aspartate aldolase (dhaa), found in Paracoccus denitrificans.